We begin with the raw amino-acid sequence, 2469 residues long: Large tegument protein deneddylase (2469 aa).

The deubiquitination activity stretch occupies residues M1–S237. One can recognise a Peptidase C76 domain in the interval E13 to Y225. Active-site residues include C33, D163, and H165. Disordered regions lie at residues E244–P318 and H346–N377. The segment covering P260–P271 has biased composition (pro residues). A region of interest (interaction with inner tegument protein) is located at residue S286. Positions K295–V309 are enriched in basic residues. Positions T352–T365 are enriched in polar residues.

The protein belongs to the herpesviridae large tegument protein family. As to quaternary structure, interacts with host CUL1 and CUL4A; these interactions inhibit the E3 ligase activity of cullins. Interacts with inner tegument protein. Interacts with capsid vertex specific component CVC2. Interacts with the major capsid protein/MCP.

It localises to the virion tegument. It is found in the host cytoplasm. Its subcellular location is the host nucleus. It carries out the reaction Thiol-dependent hydrolysis of ester, thioester, amide, peptide and isopeptide bonds formed by the C-terminal Gly of ubiquitin (a 76-residue protein attached to proteins as an intracellular targeting signal).. Large tegument protein that plays multiple roles in the viral cycle. During viral entry, remains associated with the capsid while most of the tegument is detached and participates in the capsid transport toward the host nucleus. Plays a role in the routing of the capsid at the nuclear pore complex and subsequent uncoating. Within the host nucleus, acts as a deneddylase and promotes the degradation of nuclear CRLs (cullin-RING ubiquitin ligases) and thereby stabilizes nuclear CRL substrates, while cytoplasmic CRLs remain unaffected. These modifications prevent host cell cycle S-phase progression and create a favorable environment allowing efficient viral genome replication. Participates later in the secondary envelopment of capsids. Indeed, plays a linker role for the association of the outer viral tegument to the capsids together with the inner tegument protein. In Saimiriine herpesvirus 2 (strain 11) (SaHV-2), this protein is Large tegument protein deneddylase (64).